Reading from the N-terminus, the 106-residue chain is Valine dehydrogenase (106 aa).

K91 is an active-site residue.

The protein belongs to the Glu/Leu/Phe/Val dehydrogenases family. As to quaternary structure, homodimer.

The protein localises to the cytoplasm. It carries out the reaction L-valine + NAD(+) + H2O = 3-methyl-2-oxobutanoate + NH4(+) + NADH + H(+). Its pathway is amino-acid degradation; L-valine degradation. Its function is as follows. Oxidative deamination of branched-chain amino acids. The catabolism of valine is the major source of fatty acid precursors for macrolide biosynthesis and a vital source of antibiotic precursors. The sequence is that of Valine dehydrogenase (vdh) from Streptomyces ambofaciens.